Here is a 389-residue protein sequence, read N- to C-terminus: Putative sugar efflux transporter DR_1322 (389 aa).

12 helical membrane passes run 10–30 (AVLL…LFAV), 34–54 (GMTP…AVLV), 69–89 (KPLV…LSGV), 96–116 (MATG…VFAF), 135–155 (VLRA…AAVL), 161–181 (SGVF…LLFI), 211–231 (GWVV…MVMF), 246–266 (VGFL…LFVL), 281–301 (LLLF…PLLI), 308–328 (AAVL…LMPG), 341–361 (SVVG…VFGY), and 363–383 (PVFL…LWAT).

Belongs to the major facilitator superfamily. Set transporter family.

Its subcellular location is the cell membrane. Functionally, involved in the efflux of sugars. The physiological role may be the detoxification of non-metabolizable sugar analogs. The polypeptide is Putative sugar efflux transporter DR_1322 (Deinococcus radiodurans (strain ATCC 13939 / DSM 20539 / JCM 16871 / CCUG 27074 / LMG 4051 / NBRC 15346 / NCIMB 9279 / VKM B-1422 / R1)).